The primary structure comprises 270 residues: Transmembrane protein 176B (270 aa).

A run of 4 helical transmembrane segments spans residues leucine 65–leucine 85, alanine 95–valine 115, valine 127–valine 147, and leucine 209–leucine 229. Residues serine 236, serine 245, serine 254, and serine 258 each carry the phosphoserine modification. The segment at serine 237–leucine 270 is disordered. Residues serine 260–leucine 270 are compositionally biased toward polar residues.

It belongs to the TMEM176 family.

The protein localises to the nucleus membrane. Functionally, may play a role in the process of maturation of dendritic cells. Required for the development of cerebellar granule cells. The chain is Transmembrane protein 176B (TMEM176B) from Pongo abelii (Sumatran orangutan).